Consider the following 487-residue polypeptide: Cysteine--tRNA ligase (487 aa).

C29 serves as a coordination point for Zn(2+). Residues 31-41 (VTVYDFCHIGH) carry the 'HIGH' region motif. 3 residues coordinate Zn(2+): C209, H234, and E238. Positions 266–270 (KMSKS) match the 'KMSKS' region motif. K269 is an ATP binding site.

Belongs to the class-I aminoacyl-tRNA synthetase family. As to quaternary structure, monomer. It depends on Zn(2+) as a cofactor.

It localises to the cytoplasm. It carries out the reaction tRNA(Cys) + L-cysteine + ATP = L-cysteinyl-tRNA(Cys) + AMP + diphosphate. The polypeptide is Cysteine--tRNA ligase (Trichlorobacter lovleyi (strain ATCC BAA-1151 / DSM 17278 / SZ) (Geobacter lovleyi)).